Here is a 345-residue protein sequence, read N- to C-terminus: NADH-quinone oxidoreductase subunit H (345 aa).

The next 8 membrane-spanning stretches (helical) occupy residues 15 to 35, 82 to 102, 115 to 135, 161 to 181, 190 to 210, 240 to 262, 278 to 298, and 309 to 329; these read MLLQGLAVIAFVMGSLIFMVY, FVYFLAPFLSMMLALFAFVVI, VGILFIFAASSLEVYGVIMGG, LGLIIIGIIISTGSMNLTAIV, LLNWYWLPHLPMVVLFFVSAL, YLLFMAGEYIAMYLMCALLSLLF, WWMVIKMWFWFYMFAMVKAIV, and IGWKVFLPLSLGWVVLVAILA.

It belongs to the complex I subunit 1 family. NDH-1 is composed of at least 14 different subunits, Nqo1 to Nqo14. The complex has a L-shaped structure, with the hydrophobic arm (subunits Nqo7, Nqo8, Nqo10 to Nqo14) embedded in the inner membrane and the hydrophilic peripheral arm (subunits Nqo1 to Nqo6, Nqo9) protruding into the bacterial cytoplasm. The hydrophilic domain contains all the redox centers. NADH-quinone oxidoreductase forms a supercomplex with ubiquinol-cytochrome c reductase complex (complex III or cytochrome b-c1 complex) and cytochrome c oxidase (complex IV), which stabilizes the NADH-quinone oxidoreductase complex.

It localises to the cell inner membrane. It catalyses the reaction a quinone + NADH + 5 H(+)(in) = a quinol + NAD(+) + 4 H(+)(out). NDH-1 shuttles electrons from NADH, via FMN and iron-sulfur (Fe-S) centers, to quinones in the respiratory chain. The immediate electron acceptor for the enzyme in this species is believed to be ubiquinone. Couples the redox reaction to proton translocation (for every two electrons transferred, four hydrogen ions are translocated across the cytoplasmic membrane), and thus conserves the redox energy in a proton gradient. This subunit may bind ubiquinone. The sequence is that of NADH-quinone oxidoreductase subunit H from Paracoccus denitrificans (strain Pd 1222).